A 228-amino-acid polypeptide reads, in one-letter code: UPF0173 metal-dependent hydrolase RBAM_026340 (228 aa).

Belongs to the UPF0173 family.

In Bacillus velezensis (strain DSM 23117 / BGSC 10A6 / LMG 26770 / FZB42) (Bacillus amyloliquefaciens subsp. plantarum), this protein is UPF0173 metal-dependent hydrolase RBAM_026340.